Reading from the N-terminus, the 316-residue chain is Methionyl-tRNA formyltransferase (316 aa).

Position 113–116 (113–116 (SLLP)) interacts with (6S)-5,6,7,8-tetrahydrofolate.

Belongs to the Fmt family.

It carries out the reaction L-methionyl-tRNA(fMet) + (6R)-10-formyltetrahydrofolate = N-formyl-L-methionyl-tRNA(fMet) + (6S)-5,6,7,8-tetrahydrofolate + H(+). Its function is as follows. Attaches a formyl group to the free amino group of methionyl-tRNA(fMet). The formyl group appears to play a dual role in the initiator identity of N-formylmethionyl-tRNA by promoting its recognition by IF2 and preventing the misappropriation of this tRNA by the elongation apparatus. This Proteus mirabilis (strain HI4320) protein is Methionyl-tRNA formyltransferase.